Consider the following 213-residue polypeptide: Large ribosomal subunit protein uL1 (213 aa).

The protein belongs to the universal ribosomal protein uL1 family. In terms of assembly, part of the 50S ribosomal subunit.

Functionally, binds directly to 23S rRNA. Probably involved in E site tRNA release. Its function is as follows. Protein L1 is also a translational repressor protein, it controls the translation of its operon by binding to its mRNA. The chain is Large ribosomal subunit protein uL1 from Methanosarcina mazei (strain ATCC BAA-159 / DSM 3647 / Goe1 / Go1 / JCM 11833 / OCM 88) (Methanosarcina frisia).